Here is a 287-residue protein sequence, read N- to C-terminus: Proteasome assembly chaperone 1 (287 aa).

Residues 1 to 32 (MATFFGEVQSVFSRAVDEDDEEEEGEEEEEDR) are disordered. Over residues 17-32 (DEDDEEEEGEEEEEDR) the composition is skewed to acidic residues.

The protein belongs to the PSMG1 family. Forms a heterodimer with psmg2. Degraded by the proteasome upon completion of 20S proteasome maturation.

It is found in the cytoplasm. The protein localises to the endoplasmic reticulum. Its function is as follows. Chaperone protein which promotes assembly of the 20S proteasome as part of a heterodimer with psmg2. The sequence is that of Proteasome assembly chaperone 1 from Xenopus tropicalis (Western clawed frog).